We begin with the raw amino-acid sequence, 246 residues long: Probable transcriptional regulatory protein Dole_0371 (246 aa).

This sequence belongs to the TACO1 family.

The protein resides in the cytoplasm. The polypeptide is Probable transcriptional regulatory protein Dole_0371 (Desulfosudis oleivorans (strain DSM 6200 / JCM 39069 / Hxd3) (Desulfococcus oleovorans)).